Here is a 396-residue protein sequence, read N- to C-terminus: RNA-binding motif protein, X chromosome (396 aa).

The residue at position 1 (Met-1) is an N-acetylmethionine; in Heterogeneous nuclear ribonucleoprotein G; alternate. Val-2 bears the N-acetylvaline; in Heterogeneous nuclear ribonucleoprotein G, N-terminally processed mark. The 79-residue stretch at 8 to 86 folds into the RRM domain; it reads GKLFIGGLNL…KAIKVAQATK (79 aa). Lys-22 is covalently cross-linked (Glycyl lysine isopeptide (Lys-Gly) (interchain with G-Cter in SUMO2)). N6-acetyllysine is present on Lys-30. Residues Lys-80 and Lys-86 each participate in a glycyl lysine isopeptide (Lys-Gly) (interchain with G-Cter in SUMO2) cross-link. The segment at 84–396 is disordered; the sequence is ATKPAFESGR…RGGGGGRSRY (313 aa). At Ser-91 the chain carries Phosphoserine. Omega-N-methylarginine occurs at positions 122, 141, 162, and 170. Residues 148-162 show a composition bias toward pro residues; that stretch reads RGPPPPRRAGPPPKR. 2 stretches are compositionally biased toward basic and acidic residues: residues 185-205 and 241-275; these read RGRD…RRDP and YTYR…DYAD. Positions 186 to 236 are necessary for the association to nascent RNAPII transcripts and nuclear localization; it reads GRDGYEGPPRRDPPPPRRDPYLGSREGGYSPRDGYSSRDYSSARDARDFAP. A compositionally biased stretch (gly residues) spans 323 to 332; that stretch reads YGGGRDGYAG. A compositionally biased stretch (basic and acidic residues) spans 334 to 350; it reads RSERYSGGRDRVGRADR. Phosphoserine occurs at positions 335 and 355. The segment at 336–396 is necessary for RNA-binding; that stretch reads ERYSGGRDRV…RGGGGGRSRY (61 aa).

Homomultimer. Found in the supraspliceosome complex. Identified in the spliceosome C complex. Forms a complex with ILF2, ILF3, YLPM1, KHDRBS1, NCOA5 and PPP1CA. Interacts with CLK2, KHDRBS2, KHDRBS3, SAFB/SAFB1, TRA2B and YTHDC1. Interacts with ERAP1; the interaction is RNA-independent. In terms of processing, O-glycosylated. Post-translationally, arg-185 is dimethylated, probably to asymmetric dimethylarginine.

The protein localises to the nucleus. Its function is as follows. RNA-binding protein that plays several role in the regulation of pre- and post-transcriptional processes. Implicated in tissue-specific regulation of gene transcription and alternative splicing of several pre-mRNAs. Binds to and stimulates transcription from the tumor suppressor TXNIP gene promoter; may thus be involved in tumor suppression. When associated with SAFB, binds to and stimulates transcription from the SREBF1 promoter. Associates with nascent mRNAs transcribed by RNA polymerase II. Component of the supraspliceosome complex that regulates pre-mRNA alternative splice site selection. Can either activate or suppress exon inclusion; acts additively with TRA2B to promote exon 7 inclusion of the survival motor neuron SMN2. Represses the splicing of MAPT/Tau exon 10. Binds preferentially to single-stranded 5'-CC[A/C]-rich RNA sequence motifs localized in a single-stranded conformation; probably binds RNA as a homodimer. Binds non-specifically to pre-mRNAs. Also plays a role in the cytoplasmic TNFR1 trafficking pathways; promotes both the IL-1-beta-mediated inducible proteolytic cleavage of TNFR1 ectodomains and the release of TNFR1 exosome-like vesicles to the extracellular compartment. In Bos taurus (Bovine), this protein is RNA-binding motif protein, X chromosome (RBMX).